A 189-amino-acid chain; its full sequence is Prostaglandin-H2 D-isomerase (189 aa).

A signal peptide spans 1-24 (MATPSSLWLGLALLGTLGVLQTPA). Q25 is modified (pyrrolidone carboxylic acid). N-linked (GlcNAc...) asparagine glycosylation is present at N49. C63 serves as the catalytic Nucleophile. The N-linked (GlcNAc...) asparagine glycan is linked to N76. A disulfide bridge connects residues C87 and C184.

This sequence belongs to the calycin superfamily. Lipocalin family. As to quaternary structure, monomer. Abundant in the brain and CNS, where it is expressed in tissues of the blood-brain barrier and secreted into the cerebro-spinal fluid.

It localises to the rough endoplasmic reticulum. The protein localises to the nucleus membrane. The protein resides in the golgi apparatus. It is found in the cytoplasm. Its subcellular location is the perinuclear region. It localises to the secreted. It catalyses the reaction prostaglandin H2 = prostaglandin D2. In terms of biological role, catalyzes the conversion of PGH2 to PGD2, a prostaglandin involved in smooth muscle contraction/relaxation and a potent inhibitor of platelet aggregation. Involved in a variety of CNS functions, such as sedation, NREM sleep and PGE2-induced allodynia, and may have an anti-apoptotic role in oligodendrocytes. Binds small non-substrate lipophilic molecules, including biliverdin, bilirubin, retinal, retinoic acid and thyroid hormone, and may act as a scavenger for harmful hydrophobic molecules and as a secretory retinoid and thyroid hormone transporter. Possibly involved in development and maintenance of the blood-brain, blood-retina, blood-aqueous humor and blood-testis barrier. It is likely to play important roles in both maturation and maintenance of the central nervous system and male reproductive system. Involved in PLA2G3-dependent maturation of mast cells. PLA2G3 is secreted by immature mast cells and acts on nearby fibroblasts upstream to PTDGS to synthesize PGD2, which in turn promotes mast cell maturation and degranulation via PTGDR. The polypeptide is Prostaglandin-H2 D-isomerase (PTGDS) (Sus scrofa (Pig)).